A 591-amino-acid polypeptide reads, in one-letter code: Phosphoglucan phosphatase LSF1, chloroplastic (591 aa).

Residues 1–61 (MAFLQQISGL…RRRRVVLRVV (61 aa)) constitute a chloroplast transit peptide. The Tyrosine-protein phosphatase domain maps to 291–453 (RYSKITEQIY…VDDGKHDGTP (163 aa)). Cys390 (phosphocysteine intermediate) is an active-site residue. 390-396 (CTTGFDR) provides a ligand contact to substrate.

It is found in the plastid. The protein localises to the chloroplast. In terms of biological role, starch granule-associated phosphoglucan phosphatase involved in the control of starch accumulation. Participates in the regulation of the initial steps of starch degradation at the granule surface. May release a different set of phosphate groups from those removed by DSP4. In Arabidopsis thaliana (Mouse-ear cress), this protein is Phosphoglucan phosphatase LSF1, chloroplastic (LSF1).